The primary structure comprises 81 residues: UPF0298 protein SAK_1599 (81 aa).

Belongs to the UPF0298 family.

Its subcellular location is the cytoplasm. This Streptococcus agalactiae serotype Ia (strain ATCC 27591 / A909 / CDC SS700) protein is UPF0298 protein SAK_1599.